Reading from the N-terminus, the 272-residue chain is Dermonecrotic toxin StSicTox-betaIF1 (272 aa).

Residue H5 is part of the active site. 2 residues coordinate Mg(2+): E25 and D27. H41 functions as the Nucleophile in the catalytic mechanism. 2 disulfides stabilise this stretch: C45/C51 and C47/C189. D85 is a binding site for Mg(2+).

Belongs to the arthropod phospholipase D family. Class II subfamily. Mg(2+) serves as cofactor. Expressed by the venom gland.

Its subcellular location is the secreted. It catalyses the reaction an N-(acyl)-sphingosylphosphocholine = an N-(acyl)-sphingosyl-1,3-cyclic phosphate + choline. It carries out the reaction an N-(acyl)-sphingosylphosphoethanolamine = an N-(acyl)-sphingosyl-1,3-cyclic phosphate + ethanolamine. The enzyme catalyses a 1-acyl-sn-glycero-3-phosphocholine = a 1-acyl-sn-glycero-2,3-cyclic phosphate + choline. The catalysed reaction is a 1-acyl-sn-glycero-3-phosphoethanolamine = a 1-acyl-sn-glycero-2,3-cyclic phosphate + ethanolamine. Functionally, dermonecrotic toxins cleave the phosphodiester linkage between the phosphate and headgroup of certain phospholipids (sphingolipid and lysolipid substrates), forming an alcohol (often choline) and a cyclic phosphate. This toxin acts on sphingomyelin (SM). It may also act on ceramide phosphoethanolamine (CPE), lysophosphatidylcholine (LPC) and lysophosphatidylethanolamine (LPE), but not on lysophosphatidylserine (LPS), and lysophosphatidylglycerol (LPG). It acts by transphosphatidylation, releasing exclusively cyclic phosphate products as second products. Induces dermonecrosis, hemolysis, increased vascular permeability, edema, inflammatory response, and platelet aggregation. This chain is Dermonecrotic toxin StSicTox-betaIF1, found in Sicarius terrosus (Cave spider).